The following is a 166-amino-acid chain: Transcription antitermination protein NusB (166 aa).

Positions 1-18 (MISDESDRFNPRDPKPAD) are enriched in basic and acidic residues. The segment at 1 to 28 (MISDESDRFNPRDPKPADAGKPSKSAKR) is disordered.

This sequence belongs to the NusB family.

Its function is as follows. Involved in transcription antitermination. Required for transcription of ribosomal RNA (rRNA) genes. Binds specifically to the boxA antiterminator sequence of the ribosomal RNA (rrn) operons. This is Transcription antitermination protein NusB from Pseudomonas putida (strain W619).